A 184-amino-acid chain; its full sequence is NADH-quinone oxidoreductase subunit B (184 aa).

[4Fe-4S] cluster contacts are provided by Cys-37, Cys-38, Cys-103, and Cys-132.

It belongs to the complex I 20 kDa subunit family. As to quaternary structure, NDH-1 is composed of 14 different subunits. Subunits NuoB, C, D, E, F, and G constitute the peripheral sector of the complex. [4Fe-4S] cluster serves as cofactor.

It is found in the cell membrane. The enzyme catalyses a quinone + NADH + 5 H(+)(in) = a quinol + NAD(+) + 4 H(+)(out). NDH-1 shuttles electrons from NADH, via FMN and iron-sulfur (Fe-S) centers, to quinones in the respiratory chain. The immediate electron acceptor for the enzyme in this species is believed to be a menaquinone. Couples the redox reaction to proton translocation (for every two electrons transferred, four hydrogen ions are translocated across the cytoplasmic membrane), and thus conserves the redox energy in a proton gradient. This Rhodococcus opacus (strain B4) protein is NADH-quinone oxidoreductase subunit B.